Here is a 298-residue protein sequence, read N- to C-terminus: IHLHWYEYPPMNPMMYPLLLIFMLFTGILCLAGNFVTIWVFMNTKSLRTPANLLVVNLAMSDFLMMFTMFPPMMVTCYYHTWTLGPTFCQVYAFLGNLCGCASIWTMVFITFDRYNVIVKGVAGEPLSTKKASLWILTIWVLSTTWCMAPFFGWNHYVPEGNLTGCGTDYLSEDILSRSYLYVYSTWVYFLPLAITIYCYVFIIKAVAAHEKGMRDQAKKMGIKSLRNEEAQKTSAECRLAKIAMTTVALWFIAWTPYLLINWVGMFARSYLSPVYTIWGYVFAKANAVYNPIVYAIS.

Residues 1–15 lie on the Extracellular side of the membrane; that stretch reads IHLHWYEYPPMNPMM. The chain crosses the membrane as a helical span at residues 16–40; sequence YPLLLIFMLFTGILCLAGNFVTIWV. Over 41–52 the chain is Cytoplasmic; the sequence is FMNTKSLRTPAN. Residues 53–75 traverse the membrane as a helical segment; the sequence is LLVVNLAMSDFLMMFTMFPPMMV. The Extracellular segment spans residues 76-89; sequence TCYYHTWTLGPTFC. A disulfide bridge links C89 with C166. Residues 90–112 form a helical membrane-spanning segment; the sequence is QVYAFLGNLCGCASIWTMVFITF. The 'Ionic lock' involved in activated form stabilization motif lies at 113–115; sequence DRY. The Cytoplasmic portion of the chain corresponds to 113–131; the sequence is DRYNVIVKGVAGEPLSTKK. A helical membrane pass occupies residues 132 to 152; it reads ASLWILTIWVLSTTWCMAPFF. At 153–179 the chain is on the extracellular side; it reads GWNHYVPEGNLTGCGTDYLSEDILSRS. N162 is a glycosylation site (N-linked (GlcNAc...) asparagine). Residues 180–201 form a helical membrane-spanning segment; that stretch reads YLYVYSTWVYFLPLAITIYCYV. Topologically, residues 202–242 are cytoplasmic; that stretch reads FIIKAVAAHEKGMRDQAKKMGIKSLRNEEAQKTSAECRLAK. The helical transmembrane segment at 243–264 threads the bilayer; sequence IAMTTVALWFIAWTPYLLINWV. At 265-275 the chain is on the extracellular side; it reads GMFARSYLSPV. A helical membrane pass occupies residues 276 to 297; the sequence is YTIWGYVFAKANAVYNPIVYAI. At K285 the chain carries N6-(retinylidene)lysine.

It belongs to the G-protein coupled receptor 1 family. Opsin subfamily. In terms of assembly, homodimer. Interacts with GNAQ. Contains one covalently linked retinal chromophore.

It localises to the cell projection. The protein localises to the rhabdomere membrane. Photoreceptor required for image-forming vision at low light intensity. Can use both retinal and 3-dehydroretinal as visual pigment. Light-induced isomerization of 11-cis to all-trans retinal triggers a conformational change that activates signaling via G-proteins. Signaling via GNAQ probably mediates the activation of phospholipase C. The protein is Rhodopsin (RHO) of Procambarus orcinus (Crayfish).